A 230-amino-acid polypeptide reads, in one-letter code: Ethylene-responsive transcription factor ERF012 (230 aa).

Basic and acidic residues predominate over residues 1–17 (MVKQERKIQTSSTKKEM). The segment at 1–51 (MVKQERKIQTSSTKKEMPLSSSPSSSSSSSSSSSSSSCKNKNKKSKIKKYK) is disordered. Residues 20–39 (SSSPSSSSSSSSSSSSSSCK) are compositionally biased toward low complexity. The segment covering 40-51 (NKNKKSKIKKYK) has biased composition (basic residues). Positions 49 to 106 (KYKGVRMRSWGSWVSEIRAPNQKTRIWLGSYSTAEAAARAYDVALLCLKGPQANLNFP) form a DNA-binding region, AP2/ERF.

It belongs to the AP2/ERF transcription factor family. ERF subfamily. Expressed cotyledons, ovules and seeds of immature siliques.

The protein localises to the nucleus. Transcriptional activator involved in the regulation of plant development and tolerance to abiotic stresses. Involved in salt and osmotic stress response pathways. May be regulated by the stress-related genes RD29A, RD22, DREB1A or P5CS during stress response. Binds to the GCC-box pathogenesis-related promoter element. May be involved in the regulation of gene expression by stress factors and by components of stress signal transduction pathways. The polypeptide is Ethylene-responsive transcription factor ERF012 (ERF012) (Arabidopsis thaliana (Mouse-ear cress)).